A 785-amino-acid chain; its full sequence is DNA ligase (785 aa).

NAD(+)-binding positions include 32–36 (DAEYD), 81–82 (SL), and Glu121. Lys123 serves as the catalytic N6-AMP-lysine intermediate. NAD(+) contacts are provided by Arg144, Glu181, Lys294, and Lys318. The Zn(2+) site is built by Cys412, Cys415, Cys442, and Cys448. Residues 702 to 785 (VEGLPEAGHT…AFLAKHNIPV (84 aa)) enclose the BRCT domain.

This sequence belongs to the NAD-dependent DNA ligase family. LigA subfamily. Requires Mg(2+) as cofactor. Mn(2+) serves as cofactor.

It carries out the reaction NAD(+) + (deoxyribonucleotide)n-3'-hydroxyl + 5'-phospho-(deoxyribonucleotide)m = (deoxyribonucleotide)n+m + AMP + beta-nicotinamide D-nucleotide.. Its function is as follows. DNA ligase that catalyzes the formation of phosphodiester linkages between 5'-phosphoryl and 3'-hydroxyl groups in double-stranded DNA using NAD as a coenzyme and as the energy source for the reaction. It is essential for DNA replication and repair of damaged DNA. The chain is DNA ligase from Pseudomonas fluorescens (strain SBW25).